A 235-amino-acid polypeptide reads, in one-letter code: Purine nucleoside phosphorylase DeoD-type (235 aa).

His-4 is a binding site for a purine D-ribonucleoside. Residues Gly-20, Arg-24, Arg-43, and 87–90 (RVGT) contribute to the phosphate site. A purine D-ribonucleoside is bound by residues 180-182 (EME) and 204-205 (SD). The active-site Proton donor is the Asp-205.

It belongs to the PNP/UDP phosphorylase family. In terms of assembly, homohexamer; trimer of homodimers.

It carries out the reaction a purine D-ribonucleoside + phosphate = a purine nucleobase + alpha-D-ribose 1-phosphate. The catalysed reaction is a purine 2'-deoxy-D-ribonucleoside + phosphate = a purine nucleobase + 2-deoxy-alpha-D-ribose 1-phosphate. In terms of biological role, catalyzes the reversible phosphorolytic breakdown of the N-glycosidic bond in the beta-(deoxy)ribonucleoside molecules, with the formation of the corresponding free purine bases and pentose-1-phosphate. The sequence is that of Purine nucleoside phosphorylase DeoD-type from Oceanobacillus iheyensis (strain DSM 14371 / CIP 107618 / JCM 11309 / KCTC 3954 / HTE831).